Consider the following 209-residue polypeptide: PF03932 family protein CutC (209 aa).

This sequence belongs to the CutC family.

It is found in the cytoplasm. Its function is as follows. Might participate in the control of copper homeostasis; data from other bacteria suggests it is not involved. In Enterococcus faecalis (strain ATCC 700802 / V583), this protein is PF03932 family protein CutC.